Here is a 249-residue protein sequence, read N- to C-terminus: 3alpha-hydroxy bile acid-CoA-ester 3-dehydrogenase 1/3 (249 aa).

NAD(+) is bound by residues 15–18, E38, E42, and N92; that span reads TRGI. Residue S144 coordinates substrate. Active-site proton donor/acceptor residues include Y157 and K161. NAD(+)-binding positions include K161 and 190–192; that span reads VDT.

The protein belongs to the short-chain dehydrogenases/reductases (SDR) family. Homotetramer.

The enzyme catalyses a 3alpha-hydroxy bile acid CoA + NAD(+) = a 3-oxo bile acid CoA + NADH + H(+). The catalysed reaction is choloyl-CoA + NAD(+) = 7alpha,12alpha-dihydroxy-3-oxochol-24-oyl-CoA + NADH + H(+). It catalyses the reaction chenodeoxycholoyl-CoA + NAD(+) = 7alpha-hydroxy-3-oxochol-24-oyl-CoA + NADH + H(+). It carries out the reaction deoxycholoyl-CoA + NAD(+) = 12alpha-hydroxy-3-oxocholan-24-oyl-CoA + NADH + H(+). The enzyme catalyses lithocholoyl-CoA + NAD(+) = 3-oxocholan-24-oyl-CoA + NADH + H(+). It functions in the pathway lipid metabolism; bile acid biosynthesis. Its function is as follows. Involved in the multi-step bile acid 7alpha-dehydroxylation pathway that transforms primary bile acids to secondary bile acids in the human gut. Catalyzes the oxidation of C3-hydroxyl group of CoA conjugated bile acids generating a C3-oxo bile acid intermediate. Can use choloyl-CoA, chenodeoxycholoyl-CoA, deoxycholoyl-CoA, and lithocholoyl-CoA as substrates with similar efficiency. Highly prefers NAD over NADP as cosubstrate. Also catalyzes the reverse reactions; in vitro, the preferred direction of reaction depends on the pH. Has very little activity with unconjugated (non-CoA) bile acid substrates. This chain is 3alpha-hydroxy bile acid-CoA-ester 3-dehydrogenase 1/3 (baiA1), found in Clostridium scindens (strain JCM 10418 / VPI 12708).